The following is a 184-amino-acid chain: Ribulose bisphosphate carboxylase small subunit, chloroplastic 2 (184 aa).

The transit peptide at 1–59 (MASSMMSNAATAVAVAATSGGAQANMVAPFNGLKSIASFPVTRKSNDITSIASNGGRVQ) directs the protein to the chloroplast.

Belongs to the RuBisCO small chain family. Heterohexadecamer of 8 large and 8 small subunits.

It localises to the plastid. It is found in the chloroplast. Functionally, ruBisCO catalyzes two reactions: the carboxylation of D-ribulose 1,5-bisphosphate, the primary event in carbon dioxide fixation, as well as the oxidative fragmentation of the pentose substrate. Both reactions occur simultaneously and in competition at the same active site. Although the small subunit is not catalytic it is essential for maximal activity. This is Ribulose bisphosphate carboxylase small subunit, chloroplastic 2 from Amaranthus hypochondriacus (Prince-of-Wales feather).